The primary structure comprises 477 residues: UDP-N-acetylmuramate--L-alanine ligase (477 aa).

117–123 (GTHGKTT) contacts ATP.

This sequence belongs to the MurCDEF family.

It localises to the cytoplasm. It carries out the reaction UDP-N-acetyl-alpha-D-muramate + L-alanine + ATP = UDP-N-acetyl-alpha-D-muramoyl-L-alanine + ADP + phosphate + H(+). It functions in the pathway cell wall biogenesis; peptidoglycan biosynthesis. In terms of biological role, cell wall formation. This is UDP-N-acetylmuramate--L-alanine ligase from Phenylobacterium zucineum (strain HLK1).